A 424-amino-acid chain; its full sequence is Protein shisa-9 (424 aa).

Positions 1-23 (MRRVLRLLLGCFLTELCARVCRA) are cleaved as a signal peptide. The Extracellular portion of the chain corresponds to 24-149 (QERAGHGQLA…DPLHDPTKDK (126 aa)). Residues asparagine 45, asparagine 89, and asparagine 116 are each glycosylated (N-linked (GlcNAc...) asparagine). Residues 150–170 (TNLIVYIICGVVAVMVLVGIF) form a helical membrane-spanning segment. At 171 to 424 (TKLGLEKAHR…ITNSKTEVTV (254 aa)) the chain is on the cytoplasmic side. A disordered region spans residues 333–424 (PRAFSPEHGP…ITNSKTEVTV (92 aa)). Over residues 414-424 (FITNSKTEVTV) the composition is skewed to polar residues.

The protein belongs to the shisa family. SHISA9 subfamily. In terms of assembly, component of some AMPA receptors (ionotropic glutamate receptors) complex, at least composed of some AMPA receptor (GRIA1, GRIA2 and/or GRIA3), CACNG2 and SHISA9, as well as low level of DLG4.

The protein localises to the cell projection. Its subcellular location is the dendritic spine membrane. It is found in the synapse. In terms of biological role, regulator of short-term neuronal synaptic plasticity in the dentate gyrus. Associates with AMPA receptors (ionotropic glutamate receptors) in synaptic spines and promotes AMPA receptor desensitization at excitatory synapses. The polypeptide is Protein shisa-9 (SHISA9) (Homo sapiens (Human)).